A 143-amino-acid polypeptide reads, in one-letter code: Transmembrane protein 80 (143 aa).

4 helical membrane-spanning segments follow: residues 22-42 (LLCL…LLLV), 47-67 (VFTY…LMGI), 88-108 (LAAS…FLLW), and 122-142 (PLLA…AAFV).

The protein resides in the membrane. The protein localises to the cell projection. Its subcellular location is the cilium. The protein is Transmembrane protein 80 (TMEM80) of Bos taurus (Bovine).